A 77-amino-acid chain; its full sequence is U11-lycotoxin-Ls1b (77 aa).

A signal peptide spans 1–20; the sequence is MKLIIFTGLALFAIVSLIEA. A propeptide spanning residues 21–26 is cleaved from the precursor; that stretch reads EEESGR.

The protein belongs to the neurotoxin 19 (CSTX) family. 10 (U11-Lctx) subfamily. In terms of processing, contains 4 disulfide bonds. Expressed by the venom gland.

The protein localises to the secreted. The chain is U11-lycotoxin-Ls1b from Lycosa singoriensis (Wolf spider).